Consider the following 209-residue polypeptide: Uracil phosphoribosyltransferase (209 aa).

5-phospho-alpha-D-ribose 1-diphosphate contacts are provided by residues R79, R104, and 131-139 (DPMLATGHS). Uracil contacts are provided by residues I194 and 199 to 201 (GDA). D200 contacts 5-phospho-alpha-D-ribose 1-diphosphate.

Belongs to the UPRTase family. It depends on Mg(2+) as a cofactor.

It carries out the reaction UMP + diphosphate = 5-phospho-alpha-D-ribose 1-diphosphate + uracil. It participates in pyrimidine metabolism; UMP biosynthesis via salvage pathway; UMP from uracil: step 1/1. Allosterically activated by GTP. Catalyzes the conversion of uracil and 5-phospho-alpha-D-ribose 1-diphosphate (PRPP) to UMP and diphosphate. This is Uracil phosphoribosyltransferase from Caulobacter vibrioides (strain ATCC 19089 / CIP 103742 / CB 15) (Caulobacter crescentus).